Consider the following 208-residue polypeptide: Elongation factor Ts, chloroplastic (208 aa).

This sequence belongs to the EF-Ts family.

It is found in the plastid. Its subcellular location is the chloroplast. Functionally, associates with the EF-Tu.GDP complex and induces the exchange of GDP to GTP. It remains bound to the aminoacyl-tRNA.EF-Tu.GTP complex up to the GTP hydrolysis stage on the ribosome. The polypeptide is Elongation factor Ts, chloroplastic (tsf) (Cyanidium caldarium (Red alga)).